We begin with the raw amino-acid sequence, 1052 residues long: CCAAT/enhancer-binding protein zeta (1052 aa).

3 disordered regions span residues 1-40 (MSAD…KNGF), 122-158 (VENK…VSKA), and 621-677 (SQLD…AEKP). Over residues 23-34 (EDPDEEDEEDGD) the composition is skewed to acidic residues. Basic and acidic residues predominate over residues 122 to 150 (VENKKQKATEGKKTSEKKVKNKTVAEQRP). Acidic residues predominate over residues 627-643 (PESDEENFVDVGDDSDD). A phosphoserine mark is found at Ser629 and Ser641. Positions 644–677 (EKFTDADKGTATDAVKEVESKETEPESSAEAEKP) are enriched in basic and acidic residues. A Phosphoserine modification is found at Ser837. The tract at residues 876 to 969 (KGAKADLEDS…QGQKKKKKSF (94 aa)) is disordered. The span at 883–932 (EDSESSDGELGDLDDDEVSLGSMNDEDFEIDEDGGTFMDVSDDESEDAPE) shows a compositional bias: acidic residues. 3 positions are modified to phosphoserine: Ser958, Ser972, and Ser977. A disordered region spans residues 1032–1052 (KKKKNFRKKMKAPQKPKRQRK).

The protein belongs to the CBF/MAK21 family. In terms of tissue distribution, ubiquitous.

The protein localises to the nucleus. Its function is as follows. Stimulates transcription from the HSP70 promoter. The protein is CCAAT/enhancer-binding protein zeta (Cebpz) of Mus musculus (Mouse).